Consider the following 274-residue polypeptide: MIQTQSPPDALQIANRSFRSRLMTGTGKYRSFEVMRAAVAASGSEIVTVAVRRVQEGVPGHGGLGQELNWQKLWMLPNTAGAKSAEEAVRYAHFGREMAKILGQEDNHWVKLEVIPETKYLLPDPLGTLQAAETLIKQGFTVLPYINADFHLARRLWEMGCATVMPLGSPIGSGQGLQNAAAIALIIAESPVPVVVDAGIRTPSEACRAMEMGAAALLINTAIAQAEEPIAMGRAMGLATEAGRLAHQAGAIPVKTYASASSPLTGLVGSAVGS.

The active-site Schiff-base intermediate with DXP is the lysine 111. Residues glycine 172, alanine 198–glycine 199, and asparagine 220–threonine 221 each bind 1-deoxy-D-xylulose 5-phosphate.

This sequence belongs to the ThiG family. Homotetramer. Forms heterodimers with either ThiH or ThiS.

It localises to the cytoplasm. It catalyses the reaction [ThiS sulfur-carrier protein]-C-terminal-Gly-aminoethanethioate + 2-iminoacetate + 1-deoxy-D-xylulose 5-phosphate = [ThiS sulfur-carrier protein]-C-terminal Gly-Gly + 2-[(2R,5Z)-2-carboxy-4-methylthiazol-5(2H)-ylidene]ethyl phosphate + 2 H2O + H(+). The protein operates within cofactor biosynthesis; thiamine diphosphate biosynthesis. Functionally, catalyzes the rearrangement of 1-deoxy-D-xylulose 5-phosphate (DXP) to produce the thiazole phosphate moiety of thiamine. Sulfur is provided by the thiocarboxylate moiety of the carrier protein ThiS. In vitro, sulfur can be provided by H(2)S. The sequence is that of Thiazole synthase from Gloeobacter violaceus (strain ATCC 29082 / PCC 7421).